Here is a 30-residue protein sequence, read N- to C-terminus: U1-poneritoxin-Ni3a (30 aa).

It belongs to the ponericin-G family. In terms of tissue distribution, expressed by the venom gland.

Its subcellular location is the secreted. Its function is as follows. Shows a broad spectrum of activity against both Gram-positive and Gram-negative bacteria. Also has antimicrobial activity against S.cerevisiae. Has insecticidal and non-hemolytic activity. The protein is U1-poneritoxin-Ni3a of Neoponera inversa (Ant).